The sequence spans 96 residues: MAGMMKKQVVTALMLALVVLAAAPGGARAACQASQLAVCASAILSGAKPSGECCGNLRAQQGCFCQYAKDPTYGQYIRSPHARDTLTSCGLAVPHC.

The N-terminal stretch at methionine 1–alanine 29 is a signal peptide. Cystine bridges form between cysteine 31–cysteine 63, cysteine 39–cysteine 53, cysteine 54–cysteine 89, and cysteine 65–cysteine 96.

It is found in the secreted. The protein resides in the cell wall. Its function is as follows. Transfer lipids across membranes. May play a role in plant defense or in the biosynthesis of cuticle layers. This chain is Non-specific lipid-transfer protein 2G, found in Triticum aestivum (Wheat).